A 153-amino-acid chain; its full sequence is Large ribosomal subunit protein uL22 (153 aa).

This sequence belongs to the universal ribosomal protein uL22 family. Part of the 50S ribosomal subunit.

This protein binds specifically to 23S rRNA. It makes multiple contacts with different domains of the 23S rRNA in the assembled 50S subunit and ribosome. Its function is as follows. The globular domain of the protein is located near the polypeptide exit tunnel on the outside of the subunit, while an extended beta-hairpin is found that lines the wall of the exit tunnel in the center of the 70S ribosome. In Methanococcus vannielii (strain ATCC 35089 / DSM 1224 / JCM 13029 / OCM 148 / SB), this protein is Large ribosomal subunit protein uL22.